A 252-amino-acid chain; its full sequence is Putative phosphonates utilization ATP-binding protein PhnK (252 aa).

In terms of domain architecture, ABC transporter spans Leu6–Val246. Residue Gly38–Thr45 coordinates ATP.

It belongs to the ABC transporter superfamily. Forms a complex with PhnG, PhnH, PhnI and PhnJ with the suggested composition PhnG(4)H(2)I(2)J(2)K.

Its function is as follows. Belongs to an operon involved in alkylphosphonate uptake and C-P lyase. Exact function not known. PhnK is not required for the ribophosphonate triphosphate (RPnTP) synthase reaction. The protein is Putative phosphonates utilization ATP-binding protein PhnK (phnK) of Escherichia coli (strain K12).